We begin with the raw amino-acid sequence, 319 residues long: Acetyl-coenzyme A carboxylase carboxyl transferase subunit alpha (319 aa).

Residues Asn32–Ala293 enclose the CoA carboxyltransferase C-terminal domain.

This sequence belongs to the AccA family. In terms of assembly, acetyl-CoA carboxylase is a heterohexamer composed of biotin carboxyl carrier protein (AccB), biotin carboxylase (AccC) and two subunits each of ACCase subunit alpha (AccA) and ACCase subunit beta (AccD).

The protein resides in the cytoplasm. The catalysed reaction is N(6)-carboxybiotinyl-L-lysyl-[protein] + acetyl-CoA = N(6)-biotinyl-L-lysyl-[protein] + malonyl-CoA. It functions in the pathway lipid metabolism; malonyl-CoA biosynthesis; malonyl-CoA from acetyl-CoA: step 1/1. In terms of biological role, component of the acetyl coenzyme A carboxylase (ACC) complex. First, biotin carboxylase catalyzes the carboxylation of biotin on its carrier protein (BCCP) and then the CO(2) group is transferred by the carboxyltransferase to acetyl-CoA to form malonyl-CoA. This Xylella fastidiosa (strain Temecula1 / ATCC 700964) protein is Acetyl-coenzyme A carboxylase carboxyl transferase subunit alpha.